The primary structure comprises 607 residues: Albumin B (607 aa).

Positions 1 to 18 are cleaved as a signal peptide; it reads MKWITLICLLISSSFIES. A propeptide spanning residues 19–24 is cleaved from the precursor; it reads RILFKR. 3 consecutive Albumin domains span residues 22 to 209, 210 to 402, and 403 to 600; these read FKRD…KQLM, KQSH…RFMN, and EAKE…VLIE. Histidine 30 provides a ligand contact to Cu cation. Intrachain disulfides connect cysteine 80-cysteine 88, cysteine 101-cysteine 117, cysteine 116-cysteine 127, cysteine 147-cysteine 192, cysteine 191-cysteine 200, cysteine 223-cysteine 269, cysteine 268-cysteine 276, cysteine 288-cysteine 302, cysteine 301-cysteine 312, cysteine 339-cysteine 384, cysteine 383-cysteine 392, cysteine 415-cysteine 461, cysteine 460-cysteine 471, cysteine 484-cysteine 500, cysteine 499-cysteine 510, cysteine 537-cysteine 582, and cysteine 581-cysteine 590.

It belongs to the ALB/AFP/VDB family. In terms of tissue distribution, plasma.

It is found in the secreted. In terms of biological role, serum albumin, the main protein of plasma, has a good binding capacity for water, Ca(2+), Na(+), K(+), fatty acids, hormones, bilirubin and drugs. Its main function is the regulation of the colloidal osmotic pressure of blood. The protein is Albumin B (alb-b) of Xenopus laevis (African clawed frog).